A 168-amino-acid polypeptide reads, in one-letter code: Group IIF secretory phospholipase A2 (168 aa).

The N-terminal stretch at 1–20 (MKKFFAIAVLAGSVVTTAHS) is a signal peptide. Disulfide bonds link cysteine 46–cysteine 138, cysteine 48–cysteine 64, cysteine 63–cysteine 120, cysteine 69–cysteine 145, cysteine 70–cysteine 113, cysteine 79–cysteine 106, and cysteine 98–cysteine 111. Residues tyrosine 47, glycine 49, and glycine 51 each coordinate Ca(2+). Residue histidine 67 is part of the active site. Position 68 (aspartate 68) interacts with Ca(2+). N-linked (GlcNAc...) asparagine glycosylation is found at asparagine 92 and asparagine 102. Aspartate 114 is a catalytic residue. Positions 139–168 (QGPTPNCSIYDPYPEEVTCGHGLPATPVST) are required for localization on the plasma membrane. Asparagine 144 carries N-linked (GlcNAc...) asparagine glycosylation.

It belongs to the phospholipase A2 family. Ca(2+) serves as cofactor. In terms of tissue distribution, strongly expressed in testis.

It is found in the secreted. The protein localises to the cell membrane. The catalysed reaction is a 1,2-diacyl-sn-glycero-3-phosphocholine + H2O = a 1-acyl-sn-glycero-3-phosphocholine + a fatty acid + H(+). It catalyses the reaction 1-hexadecanoyl-2-(9Z-octadecenoyl)-sn-glycero-3-phospho-(1'-sn-glycerol) + H2O = 1-hexadecanoyl-sn-glycero-3-phospho-(1'-sn-glycerol) + (9Z)-octadecenoate + H(+). The enzyme catalyses 1-hexadecanoyl-2-(9Z,12Z-octadecadienoyl)-sn-glycero-3-phosphoethanolamine + H2O = 1-hexadecanoyl-sn-glycero-3-phosphoethanolamine + (9Z,12Z)-octadecadienoate + H(+). It carries out the reaction 1-hexadecanoyl-2-(5Z,8Z,11Z,14Z-eicosatetraenoyl)-sn-glycero-3-phosphoethanolamine + H2O = 1-hexadecanoyl-sn-glycero-3-phosphoethanolamine + (5Z,8Z,11Z,14Z)-eicosatetraenoate + H(+). The catalysed reaction is 1-hexadecanoyl-2-(9Z-octadecenoyl)-sn-glycero-3-phosphocholine + H2O = 1-hexadecanoyl-sn-glycero-3-phosphocholine + (9Z)-octadecenoate + H(+). It catalyses the reaction 1-hexadecanoyl-2-(9Z-octadecenoyl)-sn-glycero-3-phospho-L-serine + H2O = 1-hexadecanoyl-sn-glycero-3-phospho-L-serine + (9Z)-octadecenoate + H(+). Secretory calcium-dependent phospholipase A2 that primarily targets extracellular phospholipids. Hydrolyzes the ester bond of the fatty acyl group attached at the sn-2 position of phospholipids (phospholipase A2 activity), the catalytic efficiency decreasing in the following order: phosphatidylglycerols &gt; phosphatidylethanolamines &gt; phosphatidylcholines &gt; phosphatidylserines. May play a role in lipid mediator production in inflammatory conditions, by providing arachidonic acid to downstream cyclooxygenases and lipoxygenases. The protein is Group IIF secretory phospholipase A2 (Pla2g2f) of Mus musculus (Mouse).